Reading from the N-terminus, the 117-residue chain is Large ribosomal subunit protein uL18 (117 aa).

Belongs to the universal ribosomal protein uL18 family. Part of the 50S ribosomal subunit; part of the 5S rRNA/L5/L18/L25 subcomplex. Contacts the 5S and 23S rRNAs.

Functionally, this is one of the proteins that bind and probably mediate the attachment of the 5S RNA into the large ribosomal subunit, where it forms part of the central protuberance. This Actinobacillus succinogenes (strain ATCC 55618 / DSM 22257 / CCUG 43843 / 130Z) protein is Large ribosomal subunit protein uL18.